The chain runs to 406 residues: Argininosuccinate synthase (406 aa).

ATP contacts are provided by residues 11-19 (AYSGGLDTS) and Ala38. Residues Tyr91 and Ser96 each coordinate L-citrulline. Gly121 serves as a coordination point for ATP. Residues Thr123, Asn127, and Asp128 each coordinate L-aspartate. L-citrulline is bound at residue Asn127. Residues Arg131, Ser181, Ser190, Glu266, and Tyr278 each coordinate L-citrulline.

Belongs to the argininosuccinate synthase family. Type 1 subfamily. As to quaternary structure, homotetramer.

The protein localises to the cytoplasm. The enzyme catalyses L-citrulline + L-aspartate + ATP = 2-(N(omega)-L-arginino)succinate + AMP + diphosphate + H(+). The protein operates within amino-acid biosynthesis; L-arginine biosynthesis; L-arginine from L-ornithine and carbamoyl phosphate: step 2/3. The polypeptide is Argininosuccinate synthase (Campylobacter jejuni subsp. doylei (strain ATCC BAA-1458 / RM4099 / 269.97)).